Reading from the N-terminus, the 171-residue chain is ATP synthase subunit b (171 aa).

A helical transmembrane segment spans residues 2–22; it reads FVVKMVLGFLILLSPLCATGL.

It belongs to the ATPase B chain family. As to quaternary structure, F-type ATPases have 2 components, F(1) - the catalytic core - and F(0) - the membrane proton channel. F(1) has five subunits: alpha(3), beta(3), gamma(1), delta(1), epsilon(1). F(0) has three main subunits: a(1), b(2) and c(10-14). The alpha and beta chains form an alternating ring which encloses part of the gamma chain. F(1) is attached to F(0) by a central stalk formed by the gamma and epsilon chains, while a peripheral stalk is formed by the delta and b chains.

The protein localises to the cell inner membrane. F(1)F(0) ATP synthase produces ATP from ADP in the presence of a proton or sodium gradient. F-type ATPases consist of two structural domains, F(1) containing the extramembraneous catalytic core and F(0) containing the membrane proton channel, linked together by a central stalk and a peripheral stalk. During catalysis, ATP synthesis in the catalytic domain of F(1) is coupled via a rotary mechanism of the central stalk subunits to proton translocation. Its function is as follows. Component of the F(0) channel, it forms part of the peripheral stalk, linking F(1) to F(0). This Helicobacter pylori (strain ATCC 700392 / 26695) (Campylobacter pylori) protein is ATP synthase subunit b.